Reading from the N-terminus, the 626-residue chain is Chaperone protein HtpG (626 aa).

Residues 1 to 341 (METKQFKAES…SEDLSLNISR (341 aa)) form an a; substrate-binding region. The b stretch occupies residues 342 to 552 (EILQHDRQLK…EGELSIEMEK (211 aa)). The tract at residues 490–509 (DLGIEGEEKENTSSSDDKEN) is disordered. Residues 498–509 (KENTSSSDDKEN) are compositionally biased toward basic and acidic residues. The tract at residues 553–626 (VLNAMPNNQN…FTNNICKIMK (74 aa)) is c.

The protein belongs to the heat shock protein 90 family. As to quaternary structure, homodimer.

It is found in the cytoplasm. Its function is as follows. Molecular chaperone. Has ATPase activity. This chain is Chaperone protein HtpG, found in Clostridium botulinum (strain Loch Maree / Type A3).